The primary structure comprises 312 residues: DDRGK domain-containing protein 1 (312 aa).

Topologically, residues 1–2 (ME) are lumenal. A helical membrane pass occupies residues 3–23 (LIILVGIATALLVVIITLYLL). The Cytoplasmic portion of the chain corresponds to 24 to 312 (QKKNAAPETK…ISAGGEEASS (289 aa)). A compositionally biased stretch (low complexity) spans 59–79 (NQRNRLRQNAPAAPAGQVAPA). Positions 59–162 (NQRNRLRQNA…RKHQEDLEAE (104 aa)) are disordered. Over residues 110-162 (LDEKMGAKKRAKMEAKEQKRLQREQELHDREQRKVKEAKEEAERKHQEDLEAE) the composition is skewed to basic and acidic residues.

The protein belongs to the DDRGK1 family. In terms of assembly, interacts with Atg9; the interaction is transient.

It localises to the endoplasmic reticulum membrane. Functionally, substrate adapter for ufmylation, the covalent attachment of the ubiquitin-like modifier UFM1 to substrate proteins. Required for ufmylation of Atg9; protects the nervous system during aging, possibly by stabilizing Atg9 and supporting its function. The polypeptide is DDRGK domain-containing protein 1 (Drosophila yakuba (Fruit fly)).